The following is a 249-amino-acid chain: EID1-like F-box protein 2 (249 aa).

Residues His-16 to Ala-68 enclose the F-box domain.

In Arabidopsis thaliana (Mouse-ear cress), this protein is EID1-like F-box protein 2 (EDL2).